The following is a 147-amino-acid chain: Large ribosomal subunit protein uL15 (147 aa).

Residues 1–57 (MKLHELKSAPKSRNHKAKVVGRGHGSGLGKTSGRGQKGQKARKSGRTRPGFEGGQTP) form a disordered region. The segment covering 10–21 (PKSRNHKAKVVG) has biased composition (basic residues). Over residues 22 to 36 (RGHGSGLGKTSGRGQ) the composition is skewed to gly residues. Basic residues predominate over residues 37–46 (KGQKARKSGR).

It belongs to the universal ribosomal protein uL15 family. As to quaternary structure, part of the 50S ribosomal subunit.

Binds to the 23S rRNA. The sequence is that of Large ribosomal subunit protein uL15 from Mycoplasmoides gallisepticum (strain R(low / passage 15 / clone 2)) (Mycoplasma gallisepticum).